The primary structure comprises 32 residues: Cytochrome b6-f complex subunit 7 (32 aa).

Residues 9-27 (AAVFWILIPIGLVGGALLL) form a helical membrane-spanning segment.

It belongs to the PetM family. The 4 large subunits of the cytochrome b6-f complex are cytochrome b6, subunit IV (17 kDa polypeptide, PetD), cytochrome f and the Rieske protein, while the 4 small subunits are PetG, PetL, PetM and PetN. The complex functions as a dimer.

The protein resides in the cellular thylakoid membrane. In terms of biological role, component of the cytochrome b6-f complex, which mediates electron transfer between photosystem II (PSII) and photosystem I (PSI), cyclic electron flow around PSI, and state transitions. The chain is Cytochrome b6-f complex subunit 7 from Prochlorococcus marinus (strain MIT 9515).